The sequence spans 512 residues: D-alanine--D-alanyl carrier protein ligase (512 aa).

152–153 (TS) contributes to the ATP binding site. Position 199 (Asp199) interacts with D-alanine. Residue 294-299 (NAYGPT) coordinates ATP. Val303 lines the D-alanine pocket. Residues Asp385, 397 to 400 (YGGR), and Lys499 each bind ATP. Lys499 is a D-alanine binding site.

The protein belongs to the ATP-dependent AMP-binding enzyme family. DltA subfamily.

Its subcellular location is the cytoplasm. It catalyses the reaction holo-[D-alanyl-carrier protein] + D-alanine + ATP = D-alanyl-[D-alanyl-carrier protein] + AMP + diphosphate. The protein operates within cell wall biogenesis; lipoteichoic acid biosynthesis. Its function is as follows. Catalyzes the first step in the D-alanylation of lipoteichoic acid (LTA), the activation of D-alanine and its transfer onto the D-alanyl carrier protein (Dcp) DltC. In an ATP-dependent two-step reaction, forms a high energy D-alanyl-AMP intermediate, followed by transfer of the D-alanyl residue as a thiol ester to the phosphopantheinyl prosthetic group of the Dcp. D-alanylation of LTA plays an important role in modulating the properties of the cell wall in Gram-positive bacteria, influencing the net charge of the cell wall. This chain is D-alanine--D-alanyl carrier protein ligase, found in Streptococcus equi subsp. equi (strain 4047).